The primary structure comprises 124 residues: Small ribosomal subunit protein uS12c (124 aa).

A disordered region spans residues 104 to 124 (SGGVKDRTQRRSKYGVKKPKS). The span at 113–124 (RRSKYGVKKPKS) shows a compositional bias: basic residues.

The protein belongs to the universal ribosomal protein uS12 family. As to quaternary structure, part of the 30S ribosomal subunit.

It localises to the plastid. The protein localises to the chloroplast. In terms of biological role, with S4 and S5 plays an important role in translational accuracy. Located at the interface of the 30S and 50S subunits. This chain is Small ribosomal subunit protein uS12c (rps12), found in Thalassiosira pseudonana (Marine diatom).